A 196-amino-acid chain; its full sequence is UPF0134 protein MPN_501 (196 aa).

It belongs to the UPF0134 family.

The sequence is that of UPF0134 protein MPN_501 from Mycoplasma pneumoniae (strain ATCC 29342 / M129 / Subtype 1) (Mycoplasmoides pneumoniae).